We begin with the raw amino-acid sequence, 382 residues long: Pyrimidine monooxygenase RutA (382 aa).

Residues 68–69 (IK), N134, E143, 159–160 (RY), and S209 each bind FMN.

It belongs to the NtaA/SnaA/DszA monooxygenase family. RutA subfamily.

It catalyses the reaction uracil + FMNH2 + NADH + O2 = (Z)-3-ureidoacrylate + FMN + NAD(+) + H2O + H(+). The catalysed reaction is thymine + FMNH2 + NADH + O2 = (Z)-2-methylureidoacrylate + FMN + NAD(+) + H2O + H(+). In terms of biological role, catalyzes the pyrimidine ring opening between N-3 and C-4 by an unusual flavin hydroperoxide-catalyzed mechanism, adding oxygen atoms in the process to yield ureidoacrylate peracid, that immediately reacts with FMN forming ureidoacrylate and FMN-N(5)-oxide. The FMN-N(5)-oxide reacts spontaneously with NADH to produce FMN. Requires the flavin reductase RutF to regenerate FMN in vivo. The sequence is that of Pyrimidine monooxygenase RutA from Escherichia coli (strain K12 / MC4100 / BW2952).